A 263-amino-acid polypeptide reads, in one-letter code: Putative cysteine-rich repeat secretory protein 31 (263 aa).

The first 32 residues, 1–32 (MHNSYSLSKRLVLVLFLAVVATQLFLIRNVSS), serve as a signal peptide directing secretion. Gnk2-homologous domains follow at residues 39–141 (YLHH…AIEV) and 146–260 (YDNN…FYPF).

This sequence belongs to the cysteine-rich repeat secretory protein family.

Its subcellular location is the secreted. This Arabidopsis thaliana (Mouse-ear cress) protein is Putative cysteine-rich repeat secretory protein 31 (CRRSP31).